We begin with the raw amino-acid sequence, 157 residues long: uncharacterized protein (157 aa).

Residues 9-146 form the N-acetyltransferase domain; it reads LLINYKTLDE…GDFYVWHPET (138 aa).

This is an uncharacterized protein from Bacillus cereus (strain ATCC 10987 / NRS 248).